A 265-amino-acid chain; its full sequence is UDP-N-acetylenolpyruvoylglucosamine reductase (265 aa).

The region spanning 15–169 (GVGGPAELWT…TRVRLKLKER (155 aa)) is the FAD-binding PCMH-type domain. The active site involves R149. A disordered region spans residues 182-203 (DRARKGQPKRKSAGCAFKNPPG). C196 functions as the Proton donor in the catalytic mechanism.

It belongs to the MurB family. Requires FAD as cofactor.

It localises to the cytoplasm. It carries out the reaction UDP-N-acetyl-alpha-D-muramate + NADP(+) = UDP-N-acetyl-3-O-(1-carboxyvinyl)-alpha-D-glucosamine + NADPH + H(+). The protein operates within cell wall biogenesis; peptidoglycan biosynthesis. Functionally, cell wall formation. The chain is UDP-N-acetylenolpyruvoylglucosamine reductase from Thermus thermophilus (strain ATCC 27634 / DSM 579 / HB8).